Consider the following 473-residue polypeptide: Arginine biosynthesis bifunctional protein ArgJ, mitochondrial (473 aa).

Residues Thr-201, Lys-230, Thr-241, Glu-328, Asn-468, and Thr-473 each contribute to the substrate site. Thr-241 functions as the Nucleophile in the catalytic mechanism.

This sequence belongs to the ArgJ family. Heterodimer of an alpha and a beta chain. The alpha and beta chains are autoproteolytically processed from a single precursor protein within the mitochondrion.

The protein resides in the mitochondrion matrix. It carries out the reaction N(2)-acetyl-L-ornithine + L-glutamate = N-acetyl-L-glutamate + L-ornithine. The catalysed reaction is L-glutamate + acetyl-CoA = N-acetyl-L-glutamate + CoA + H(+). The protein operates within amino-acid biosynthesis; L-arginine biosynthesis; L-ornithine and N-acetyl-L-glutamate from L-glutamate and N(2)-acetyl-L-ornithine (cyclic): step 1/1. It participates in amino-acid biosynthesis; L-arginine biosynthesis; N(2)-acetyl-L-ornithine from L-glutamate: step 1/4. Its function is as follows. Catalyzes two activities which are involved in the cyclic version of arginine biosynthesis: the synthesis of acetylglutamate from glutamate and acetyl-CoA, and of ornithine by transacetylation between acetylornithine and glutamate. The protein is Arginine biosynthesis bifunctional protein ArgJ, mitochondrial of Paracoccidioides brasiliensis (strain Pb18).